The primary structure comprises 257 residues: Ribosome-recycling factor, mitochondrial (257 aa).

Belongs to the RRF family.

The protein localises to the mitochondrion. Necessary for protein synthesis in mitochondria. Functions as a ribosome recycling factor in mitochondria. The protein is Ribosome-recycling factor, mitochondrial (RRF1) of Debaryomyces hansenii (strain ATCC 36239 / CBS 767 / BCRC 21394 / JCM 1990 / NBRC 0083 / IGC 2968) (Yeast).